The sequence spans 1390 residues: DNA-directed RNA polymerase subunit beta'' (1390 aa).

Cys-224, Cys-295, Cys-302, and Cys-305 together coordinate Zn(2+).

This sequence belongs to the RNA polymerase beta' chain family. RpoC2 subfamily. In plastids the minimal PEP RNA polymerase catalytic core is composed of four subunits: alpha, beta, beta', and beta''. When a (nuclear-encoded) sigma factor is associated with the core the holoenzyme is formed, which can initiate transcription. Zn(2+) is required as a cofactor.

Its subcellular location is the plastid. It localises to the chloroplast. It catalyses the reaction RNA(n) + a ribonucleoside 5'-triphosphate = RNA(n+1) + diphosphate. Functionally, DNA-dependent RNA polymerase catalyzes the transcription of DNA into RNA using the four ribonucleoside triphosphates as substrates. In Daucus carota (Wild carrot), this protein is DNA-directed RNA polymerase subunit beta''.